The chain runs to 340 residues: Branched-chain-amino-acid aminotransferase (340 aa).

Residue lysine 187 is modified to N6-(pyridoxal phosphate)lysine.

The protein belongs to the class-IV pyridoxal-phosphate-dependent aminotransferase family. The cofactor is pyridoxal 5'-phosphate.

The enzyme catalyses L-leucine + 2-oxoglutarate = 4-methyl-2-oxopentanoate + L-glutamate. It carries out the reaction L-isoleucine + 2-oxoglutarate = (S)-3-methyl-2-oxopentanoate + L-glutamate. It catalyses the reaction L-valine + 2-oxoglutarate = 3-methyl-2-oxobutanoate + L-glutamate. It participates in amino-acid biosynthesis; L-isoleucine biosynthesis; L-isoleucine from 2-oxobutanoate: step 4/4. Its pathway is amino-acid biosynthesis; L-leucine biosynthesis; L-leucine from 3-methyl-2-oxobutanoate: step 4/4. It functions in the pathway amino-acid biosynthesis; L-valine biosynthesis; L-valine from pyruvate: step 4/4. Functionally, acts on leucine, isoleucine and valine. This chain is Branched-chain-amino-acid aminotransferase (ilvE), found in Helicobacter pylori (strain J99 / ATCC 700824) (Campylobacter pylori J99).